A 145-amino-acid chain; its full sequence is 3-hydroxyacyl-[acyl-carrier-protein] dehydratase FabZ (145 aa).

Residue histidine 49 is part of the active site.

It belongs to the thioester dehydratase family. FabZ subfamily.

It is found in the cytoplasm. The enzyme catalyses a (3R)-hydroxyacyl-[ACP] = a (2E)-enoyl-[ACP] + H2O. Involved in unsaturated fatty acids biosynthesis. Catalyzes the dehydration of short chain beta-hydroxyacyl-ACPs and long chain saturated and unsaturated beta-hydroxyacyl-ACPs. This is 3-hydroxyacyl-[acyl-carrier-protein] dehydratase FabZ from Rickettsia africae (strain ESF-5).